Here is a 64-residue protein sequence, read N- to C-terminus: Large ribosomal subunit protein bL35 (64 aa).

The protein belongs to the bacterial ribosomal protein bL35 family.

This chain is Large ribosomal subunit protein bL35, found in Ureaplasma urealyticum serovar 10 (strain ATCC 33699 / Western).